The following is a 180-amino-acid chain: Inner membrane-spanning protein YciB (180 aa).

The next 6 helical transmembrane spans lie at 4–24 (LLSE…GGGI), 25–45 (QHAT…CYVI), 49–69 (VSKL…ITLI), 76–96 (IKIK…MSGI), 118–138 (ITLS…NEVV), and 150–170 (FKVF…LPLL).

This sequence belongs to the YciB family.

The protein localises to the cell inner membrane. In terms of biological role, plays a role in cell envelope biogenesis, maintenance of cell envelope integrity and membrane homeostasis. This Rickettsia africae (strain ESF-5) protein is Inner membrane-spanning protein YciB.